Consider the following 96-residue polypeptide: Conantokin Rl-C (96 aa).

The signal sequence occupies residues 1 to 21 (MQLYTYLYLLVPLVTFHLILG). Positions 22–78 (TGTLDHGDALTERRSADATALKPEPVLLQKSSARSTDDNGKDTQMKRIFKKRRNKAR) are excised as a propeptide. A disordered region spans residues 36-85 (SADATALKPEPVLLQKSSARSTDDNGKDTQMKRIFKKRRNKARGEEELSE). Over residues 56–66 (STDDNGKDTQM) the composition is skewed to basic and acidic residues. Residue Glu-81 participates in a divalent metal cation binding. 4-carboxyglutamate occurs at positions 81, 82, 85, 89, and 93. A divalent metal cation contacts are provided by Glu-85, Glu-89, and Glu-93. Asn-96 is modified (asparagine amide).

This sequence belongs to the conotoxin B superfamily. Ca(2+) is required as a cofactor. Requires Mg(2+) as cofactor. In terms of tissue distribution, expressed by the venom duct.

It is found in the secreted. Its function is as follows. Conantokins inhibit N-methyl-D-aspartate (NMDA) receptors. This toxin has antagonist activity on NR2B/GRIN2B (IC(50)=1.4 uM) and NR2A/GRIN2A (IC(50)=2.9 uM) subunits, when tested on rat receptors. This Conus rolani (Cone snail) protein is Conantokin Rl-C.